The following is a 120-amino-acid chain: Nascent polypeptide-associated complex protein (120 aa).

The 69-residue stretch at 12-80 folds into the NAC-A/B domain; it reads GMNPAKMKQM…VKEVPKSLEI (69 aa).

This sequence belongs to the NAC-alpha family. As to quaternary structure, homodimer. Interacts with the ribosome. Binds ribosomal RNA.

Its function is as follows. Contacts the emerging nascent chain on the ribosome. This Methanosarcina mazei (strain ATCC BAA-159 / DSM 3647 / Goe1 / Go1 / JCM 11833 / OCM 88) (Methanosarcina frisia) protein is Nascent polypeptide-associated complex protein.